A 242-amino-acid polypeptide reads, in one-letter code: Protein MHF1 homolog (242 aa).

The disordered stretch occupies residues 208-242 (LKAKEPQSERKRKKGSAKKEDKASSSNAVRITTDL). The span at 231–242 (SSSNAVRITTDL) shows a compositional bias: polar residues.

The protein belongs to the TAF9 family. CENP-S/MHF1 subfamily.

The protein localises to the nucleus. Its function is as follows. Involved in the promotion of spontaneous somatic homologous recombination (HR) events, which is opposite to the function of FANCM in ordered HR. Only FANCM is essential for replicative repair in the absence of the endonuclease MUS81. Acts in the same pathway as FANCM to restrain class II meiotic crossing over (CO), and acts with FANCM during meiosis to repair interstrand cross-links (ICLs). This common pathway between MHF1 and FANCM is in parallel to the pathway that involves the RECQ4A helicase. In Arabidopsis thaliana (Mouse-ear cress), this protein is Protein MHF1 homolog.